The following is a 314-amino-acid chain: tRNA-cytidine(32) 2-sulfurtransferase (314 aa).

The PP-loop motif motif lies at 57-62 (SGGKDS). [4Fe-4S] cluster is bound by residues C132, C135, and C223.

Belongs to the TtcA family. As to quaternary structure, homodimer. Requires Mg(2+) as cofactor. [4Fe-4S] cluster is required as a cofactor.

The protein localises to the cytoplasm. The enzyme catalyses cytidine(32) in tRNA + S-sulfanyl-L-cysteinyl-[cysteine desulfurase] + AH2 + ATP = 2-thiocytidine(32) in tRNA + L-cysteinyl-[cysteine desulfurase] + A + AMP + diphosphate + H(+). The protein operates within tRNA modification. In terms of biological role, catalyzes the ATP-dependent 2-thiolation of cytidine in position 32 of tRNA, to form 2-thiocytidine (s(2)C32). The sulfur atoms are provided by the cysteine/cysteine desulfurase (IscS) system. The sequence is that of tRNA-cytidine(32) 2-sulfurtransferase from Alkalilimnicola ehrlichii (strain ATCC BAA-1101 / DSM 17681 / MLHE-1).